The chain runs to 203 residues: Fucoxanthin-chlorophyll a-c binding protein, chloroplastic (203 aa).

The transit peptide at 1 to 30 directs the protein to the chloroplast; that stretch reads MKLAIAALLAGSAAAFAPAQSGKASTALNM.

The protein belongs to the fucoxanthin chlorophyll protein family. As to quaternary structure, the LHC complex of chromophytic algae is composed of fucoxanthin, chlorophyll A and C bound non-covalently by fucoxanthin chlorophyll proteins (FCPs). The ratio of pigments in this LHC is; fucoxanthin: chlorophyll C: chlorophyll A; (0.6-1): (0.1-0.3): (1).

It localises to the plastid. The protein resides in the chloroplast thylakoid membrane. In terms of biological role, the light-harvesting complex (LHC) functions as a light receptor, it captures and delivers excitation energy to photosystems with which it is closely associated. Energy is transferred from the carotenoid and chlorophyll C (or B) to chlorophyll A and the photosynthetic reaction centers where it is used to synthesize ATP and reducing power. The polypeptide is Fucoxanthin-chlorophyll a-c binding protein, chloroplastic (FCPA) (Trieres chinensis (Marine centric diatom)).